A 97-amino-acid chain; its full sequence is Eotaxin (97 aa).

Positions 1–23 are cleaved as a signal peptide; that stretch reads MQLSTALLFLLLTATSFTSQVLA. 2 cysteine pairs are disulfide-bonded: C32–C57 and C33–C73. T94 carries an O-linked (GalNAc...) threonine glycan.

Belongs to the intercrine beta (chemokine CC) family.

It is found in the secreted. Its function is as follows. In response to the presence of allergens, this protein directly promotes the accumulation of eosinophils (a prominent feature of allergic inflammatory reactions), but not lymphocytes, macrophages or neutrophils. Binds to CCR3. The chain is Eotaxin (Ccl11) from Rattus norvegicus (Rat).